The following is a 333-amino-acid chain: Adenosine deaminase (333 aa).

Positions 12 and 14 each coordinate Zn(2+). Substrate is bound by residues H14, D16, and G170. H197 lines the Zn(2+) pocket. The Proton donor role is filled by E200. D278 serves as a coordination point for Zn(2+). D279 contributes to the substrate binding site.

It belongs to the metallo-dependent hydrolases superfamily. Adenosine and AMP deaminases family. Adenosine deaminase subfamily. The cofactor is Zn(2+).

The enzyme catalyses adenosine + H2O + H(+) = inosine + NH4(+). It carries out the reaction 2'-deoxyadenosine + H2O + H(+) = 2'-deoxyinosine + NH4(+). Functionally, catalyzes the hydrolytic deamination of adenosine and 2-deoxyadenosine. The polypeptide is Adenosine deaminase (Edwardsiella ictaluri (strain 93-146)).